The primary structure comprises 314 residues: Very long chain fatty acid elongase 4 (314 aa).

An N-linked (GlcNAc...) asparagine glycan is attached at Asn-20. Transmembrane regions (helical) follow at residues 42-62, 78-98, 127-147, 165-185, 188-208, 217-237, and 247-267; these read LMQS…FVWL, VLII…RELF, ALWW…FFIL, MFTL…FFGA, NSFI…GPWI, YLTM…ALSL, and MHWA…NFYI. The disordered stretch occupies residues 275–314; sequence KPKAGKTAMNGISANGVSKSEKQLMIENGKKQKNGKAKGD. Over residues 293–304 the composition is skewed to basic and acidic residues; sequence KSEKQLMIENGK. Positions 305–314 are enriched in basic residues; the sequence is KQKNGKAKGD. The short motif at 310-314 is the Di-lysine motif element; that stretch reads KAKGD.

Belongs to the ELO family. ELOVL4 subfamily. Oligomer. Post-translationally, N-glycosylated. In terms of tissue distribution, expressed in the retina and at much lower level in the brain. Ubiquitous, highest expression in thymus, followed by testis, small intestine, ovary, and prostate. Little or no expression in heart, lung, liver, or leukocates.

The protein localises to the endoplasmic reticulum membrane. The catalysed reaction is a very-long-chain acyl-CoA + malonyl-CoA + H(+) = a very-long-chain 3-oxoacyl-CoA + CO2 + CoA. The enzyme catalyses tetracosanoyl-CoA + malonyl-CoA + H(+) = 3-oxohexacosanoyl-CoA + CO2 + CoA. It carries out the reaction hexacosanoyl-CoA + malonyl-CoA + H(+) = 3-oxooctacosanyol-CoA + CO2 + CoA. It catalyses the reaction octacosanoyl-CoA + malonyl-CoA + H(+) = 3-oxo-triacontanoyl-CoA + CO2 + CoA. The catalysed reaction is triacontanoyl-CoA + malonyl-CoA + H(+) = 3-oxo-dotriacontanoyl-CoA + CO2 + CoA. The enzyme catalyses (19Z,22Z,25Z,28Z,31Z)-tetratriacontapentaenoyl-CoA + malonyl-CoA + H(+) = 3-oxo-(21Z,24Z,27Z,30Z,33Z)-hexatriacontapentaenoyl-CoA + CO2 + CoA. It carries out the reaction (4Z,7Z,10Z,13Z,16Z,19Z)-docosahexaenoyl-CoA + malonyl-CoA + H(+) = 3-oxo-(6Z,9Z,12Z,15Z,18Z,21Z)-tetracosahexaenoyl-CoA + CO2 + CoA. It catalyses the reaction (7Z,10Z,13Z,16Z)-docosatetraenoyl-CoA + malonyl-CoA + H(+) = (9Z,12Z,15Z,18Z)-3-oxotetracosatetraenoyl-CoA + CO2 + CoA. The catalysed reaction is (11Z,14Z,17Z,20Z,23Z)-hexacosapentaenoyl-CoA + malonyl-CoA + H(+) = 3-oxo-(13Z,16Z,19Z,22Z,25Z)-octacosapentaenoyl-CoA + CO2 + CoA. The enzyme catalyses (13Z,16Z,19Z,22Z,25Z)-octacosapentaenoyl-CoA + malonyl-CoA + H(+) = 3-oxo-(15Z,18Z,21Z,24Z,27Z)-triacontapentaenoyl-CoA + CO2 + CoA. It carries out the reaction (15Z,18Z,21Z,24Z,27Z)-triacontapentaenoyl-CoA + malonyl-CoA + H(+) = 3-oxo-(17Z,20Z,23Z,26Z,29Z)-dotriacontapentaenoyl-CoA + CO2 + CoA. It catalyses the reaction (17Z,20Z,23Z,26Z,29Z)-dotriacontapentaenoyl-CoA + malonyl-CoA + H(+) = 3-oxo-(19Z,22Z,25Z,28Z,31Z)-tetratriacontapentaenoyl-CoA + CO2 + CoA. The catalysed reaction is (21Z,24Z,27Z,30Z,33Z)-hexatriacontapentaenoyl-CoA + malonyl-CoA + H(+) = 3-oxo-(23Z,26Z,29Z,32Z,35Z)-octatriacontapentaenoyl-CoA + CO2 + CoA. The enzyme catalyses (11Z,14Z,17Z,20Z)-hexacosatetraenoyl-CoA + malonyl-CoA + H(+) = (13Z,16Z,19Z,22Z)-3-oxooctacosatetraenoyl-CoA + CO2 + CoA. It carries out the reaction (13Z,16Z,19Z,22Z)-octacosatetraenoyl-CoA + malonyl-CoA + H(+) = 3-oxo-(15Z,18Z,21Z,24Z)-triacontatetraenoyl-CoA + CO2 + CoA. It catalyses the reaction (15Z,18Z,21Z,24Z)-triacontatetraenoyl-CoA + malonyl-CoA + H(+) = 3-oxo-(17Z,20Z,23Z,26Z)-dotriacontatetraenoyl-CoA + CO2 + CoA. The catalysed reaction is (17Z,20Z,23Z,26Z)-dotriacontatetraenoyl-CoA + malonyl-CoA + H(+) = 3-oxo-(19Z,22Z,25Z,28Z)-tetratriacontatetraenoyl-CoA + CO2 + CoA. The enzyme catalyses (19Z,22Z,25Z,28Z)-tetratriacontatetraenoyl-CoA + malonyl-CoA + H(+) = 3-oxo-(21Z,24Z,27Z,30Z)-hexatriacontatetraenoyl-CoA + CO2 + CoA. It carries out the reaction (21Z,24Z,27Z,30Z)-hexatriacontatetraenoyl-CoA + malonyl-CoA + H(+) = 3-oxo-(23Z,26Z,29Z,32Z)-octatriacontatetraenoyl-CoA + CO2 + CoA. It catalyses the reaction (6Z,9Z,12Z,15Z,18Z,21Z)-tetracosahexaenoyl-CoA + malonyl-CoA + H(+) = 3-oxo-(8Z,11Z,14Z,17Z,20Z,23Z)-hexacosahexaenoyl-CoA + CO2 + CoA. The catalysed reaction is (8Z,11Z,14Z,17Z,20Z,23Z)-hexacosahexaenoyl-CoA + malonyl-CoA + H(+) = 3-oxo-(10Z,13Z,16Z,19Z,22Z,25Z)-octacosahexaenoyl-CoA + CO2 + CoA. The enzyme catalyses (10Z,13Z,16Z,19Z,22Z,25Z)-octacosahexaenoyl-CoA + malonyl-CoA + H(+) = 3-oxo-(12Z,15Z,18Z,21Z,24Z,27Z)-triacontahexaenoyl-CoA + CO2 + CoA. It carries out the reaction (12Z,15Z,18Z,21Z,24Z,27Z)-triacontahexaenoyl-CoA + malonyl-CoA + H(+) = 3-oxo-(14Z,17Z,20Z,23Z,26Z,29Z)-dotriacontahexaenoyl-CoA + CO2 + CoA. It catalyses the reaction (14Z,17Z,20Z,23Z,26Z,29Z)-dotriacontahexaenoyl-CoA + malonyl-CoA + H(+) = 3-oxo-(16Z,19Z,22Z,25Z,28Z,31Z)-tetratriacontahexaenoyl-CoA + CO2 + CoA. The catalysed reaction is (16Z,19Z,22Z,25Z,28Z,31Z)-tetratriacontahexaenoyl-CoA + malonyl-CoA + H(+) = 3-oxo-(18Z,21Z,24Z,27Z,30Z,33Z)-hexatriacontahexaenoyl-CoA + CO2 + CoA. The enzyme catalyses (9Z,12Z,15Z,18Z,21Z)-tetracosapentaenoyl-CoA + malonyl-CoA + H(+) = 3-oxo-(11Z,14Z,17Z,20Z,23Z)-hexacosapentaenoyl-CoA + CO2 + CoA. It functions in the pathway lipid metabolism; fatty acid biosynthesis. In terms of biological role, catalyzes the first and rate-limiting reaction of the four reactions that constitute the long-chain fatty acids elongation cycle. This endoplasmic reticulum-bound enzymatic process allows the addition of 2 carbons to the chain of long- and very long-chain fatty acids (VLCFAs) per cycle. Condensing enzyme that catalyzes the synthesis of very long chain saturated (VLC-SFA) and polyunsaturated (PUFA) fatty acids that are involved in multiple biological processes as precursors of membrane lipids and lipid mediators. May play a critical role in early brain and skin development. The chain is Very long chain fatty acid elongase 4 from Homo sapiens (Human).